We begin with the raw amino-acid sequence, 509 residues long: MTDATTTDVLVLGSGIAGCGAALAAAREGASVLVATKAQQPADASTDWAQGGIATTRDDPESLKRDILAAGDGEADPEAVDALVGDAAAAVEDVLVDTLGVPFDGEEGFDYAREAAHSAARILHVDAATGHHILGPFLRHLDAHENVDMLEDAAALDLITDEGAVTGALLDRNPRTGDRAETGVPVFAGSTVLATGGIGDLYRRSTNPRGSTGDGVAMAALAGADVTDAEYVQFHPTAYDDADPFLVSEAVRGEGALLRNADGERFMPDYHEDAELAPRDVVARAVAAERDATGEVRLDVSPLAFAEEFPGLAEACADRGVDWETGIPVAPCEHFLCGGVAVDTVGRTSLDRLFAVGECARTGVHGANRLASTSLLEGLVWGLRAGETAAGDDRAPAPSEPPELRDRDPDLPDGFAAEKFRRLRRVMDEHVGLRRTGADLQRAQGVLRRLKGEVDSYARTRTSRDLYQLRNAAVVGLLIARAAGENPESAGCHHRSDEAAAEEAPDAGH.

FAD is bound by residues 14–17, 45–52, and Asp-214; these read SGIA and STDWAQGG. The Proton donor/acceptor role is filled by Arg-279. FAD contacts are provided by residues Glu-358 and 374–375; that span reads SL. Disordered regions lie at residues 389–412 and 486–509; these read AAGD…PDLP and NPES…DAGH. Residues 402 to 412 are compositionally biased toward basic and acidic residues; the sequence is PELRDRDPDLP. Residues 499 to 509 are compositionally biased toward acidic residues; it reads AAAEEAPDAGH.

It belongs to the FAD-dependent oxidoreductase 2 family. NadB subfamily. Requires FAD as cofactor.

It is found in the cytoplasm. The enzyme catalyses L-aspartate + O2 = iminosuccinate + H2O2. It participates in cofactor biosynthesis; NAD(+) biosynthesis; iminoaspartate from L-aspartate (oxidase route): step 1/1. Catalyzes the oxidation of L-aspartate to iminoaspartate, the first step in the de novo biosynthesis of NAD(+). The polypeptide is L-aspartate oxidase (nadB) (Halobacterium salinarum (strain ATCC 700922 / JCM 11081 / NRC-1) (Halobacterium halobium)).